The primary structure comprises 157 residues: Small ribosomal subunit protein uS7 (157 aa).

Belongs to the universal ribosomal protein uS7 family. As to quaternary structure, part of the 30S ribosomal subunit. Contacts proteins S9 and S11.

Its function is as follows. One of the primary rRNA binding proteins, it binds directly to 16S rRNA where it nucleates assembly of the head domain of the 30S subunit. Is located at the subunit interface close to the decoding center, probably blocks exit of the E-site tRNA. The chain is Small ribosomal subunit protein uS7 from Hydrogenovibrio crunogenus (strain DSM 25203 / XCL-2) (Thiomicrospira crunogena).